The sequence spans 130 residues: uncharacterized protein (130 aa).

This is an uncharacterized protein from Methanocaldococcus jannaschii (strain ATCC 43067 / DSM 2661 / JAL-1 / JCM 10045 / NBRC 100440) (Methanococcus jannaschii).